Consider the following 297-residue polypeptide: MEDFEKIEKIGEGTYGVVYKGRNRLTGQIVAMKKIRLESDDEGVPSTAIREISLLKELKHENIVCLEDVLMEENRIYLIFEFLSMDLKKYMDSLPVDKHMESELVRSYLYQITSAILFCHRRRVLHRDLKPQNLLIDKSGLIKVADFGLGRSFGIPVRIYTHEIVTLWYRAPEVLLGSPRYSCPVDIWSIGCIFAEMATRKPLFQGDSEIDQLFRMFRILKTPTEDIWPGVTSLPDYKNTFPCWSTNQLTNQLKNLDANGIDLIQKMLIYDPVHRISAKDILEHPYFNGFQSGLVRN.

In terms of domain architecture, Protein kinase spans 4–287 (FEKIEKIGEG…AKDILEHPYF (284 aa)). ATP-binding positions include 10–18 (IGEGTYGVV) and Lys-33. Thr-14 carries the post-translational modification Phosphothreonine. Tyr-15 carries the post-translational modification Phosphotyrosine. The active-site Proton acceptor is Asp-128. The residue at position 160 (Tyr-160) is a Phosphotyrosine. Residue Thr-161 is modified to Phosphothreonine; by CAK.

Belongs to the protein kinase superfamily. CMGC Ser/Thr protein kinase family. CDC2/CDKX subfamily. Forms a stable but non-covalent complex with a regulatory subunit and with a cyclin. Component of the Frs-CycA-Cdk1 complex composed of Cdk1, CycA and Z600.

The protein resides in the nucleus. It catalyses the reaction L-seryl-[protein] + ATP = O-phospho-L-seryl-[protein] + ADP + H(+). The enzyme catalyses L-threonyl-[protein] + ATP = O-phospho-L-threonyl-[protein] + ADP + H(+). It carries out the reaction [DNA-directed RNA polymerase] + ATP = phospho-[DNA-directed RNA polymerase] + ADP + H(+). Phosphorylation at Thr-14 or Tyr-15 inactivates the enzyme, while phosphorylation at Thr-161 activates it. Plays a key role in the control of the eukaryotic cell cycle. Required for entry into S-phase and mitosis. In embryos, promotes the release of Rif1 from chromatin during mid-blastula transition. p34 is a component of the kinase complex that phosphorylates the repetitive C-terminus of RNA polymerase II. This chain is Cyclin-dependent kinase 1, found in Drosophila melanogaster (Fruit fly).